A 373-amino-acid chain; its full sequence is MSEKKINLLDLDRKAMRALFADMGEKPFRADQLMKWLYHFGVSDFEEMTNINKVLRQKLAARCEIVAPEISSFQKSTDGTIKFAINVGQGQEVETVYIPEDDRATLCVSSQVGCALECTFCSTGQQGFNRNLTVSEIVGQIWRVSHFLGFAKDTGERPITNVVMMGMGEPLLNLANVIPAMDIMLDDFGFSLSKRRVTLSTSGVVPALDKLGDALDVALAVSIHAPNDELRDILVPINKKYPLDEFLAGIRRYIAKSNANRGRVTVEYVMLDHINDSTDQAHELAKLMKDTPCKINLIPFNPYPGSPYGRSSNSRIDRFSKVLMEYGFTVIVRKTRGDDIDAACGQLAGDIRDRTKRLAKKRMQENQISVTMN.

Glu-94 acts as the Proton acceptor in catalysis. Residues 100-339 enclose the Radical SAM core domain; sequence EDDRATLCVS…VIVRKTRGDD (240 aa). A disulfide bridge connects residues Cys-107 and Cys-344. [4Fe-4S] cluster is bound by residues Cys-114, Cys-118, and Cys-121. S-adenosyl-L-methionine contacts are provided by residues 168 to 169, Ser-200, 222 to 224, and Asn-301; these read GE and SIH. The S-methylcysteine intermediate role is filled by Cys-344.

This sequence belongs to the radical SAM superfamily. RlmN family. It depends on [4Fe-4S] cluster as a cofactor.

The protein resides in the cytoplasm. The enzyme catalyses adenosine(2503) in 23S rRNA + 2 reduced [2Fe-2S]-[ferredoxin] + 2 S-adenosyl-L-methionine = 2-methyladenosine(2503) in 23S rRNA + 5'-deoxyadenosine + L-methionine + 2 oxidized [2Fe-2S]-[ferredoxin] + S-adenosyl-L-homocysteine. It carries out the reaction adenosine(37) in tRNA + 2 reduced [2Fe-2S]-[ferredoxin] + 2 S-adenosyl-L-methionine = 2-methyladenosine(37) in tRNA + 5'-deoxyadenosine + L-methionine + 2 oxidized [2Fe-2S]-[ferredoxin] + S-adenosyl-L-homocysteine. In terms of biological role, specifically methylates position 2 of adenine 2503 in 23S rRNA and position 2 of adenine 37 in tRNAs. m2A2503 modification seems to play a crucial role in the proofreading step occurring at the peptidyl transferase center and thus would serve to optimize ribosomal fidelity. This Shewanella baltica (strain OS185) protein is Dual-specificity RNA methyltransferase RlmN.